The sequence spans 246 residues: Small ribosomal subunit protein uS2 (246 aa).

Residues 225–246 (SKSSASVPNKDEYVAAEDGAAE) form a disordered region.

It belongs to the universal ribosomal protein uS2 family.

The protein is Small ribosomal subunit protein uS2 of Cellvibrio japonicus (strain Ueda107) (Pseudomonas fluorescens subsp. cellulosa).